The following is a 386-amino-acid chain: 2,3-diketo-5-methylthiopentyl-1-phosphate enolase (386 aa).

The Proton acceptor role is filled by Lys-85. Substrate-binding positions include Lys-131, 157-160 (KDDE), His-248, Gly-316, and 338-339 (GT). Mg(2+) contacts are provided by Lys-157, Asp-159, and Glu-160. The residue at position 157 (Lys-157) is an N6-carboxylysine.

Belongs to the RuBisCO large chain family. Type IV subfamily. In terms of assembly, homodimer. Requires Mg(2+) as cofactor.

The enzyme catalyses 5-methylsulfanyl-2,3-dioxopentyl phosphate = 2-hydroxy-5-methylsulfanyl-3-oxopent-1-enyl phosphate. It participates in amino-acid biosynthesis; L-methionine biosynthesis via salvage pathway; L-methionine from S-methyl-5-thio-alpha-D-ribose 1-phosphate: step 3/6. Its function is as follows. Catalyzes the enolization of 2,3-diketo-5-methylthiopentyl-1-phosphate (DK-MTP-1-P) into 2-hydroxy-3-keto-5-methylthiopentenyl-1-phosphate (HK-MTPenyl-1-P). The protein is 2,3-diketo-5-methylthiopentyl-1-phosphate enolase of Microcystis aeruginosa (strain NIES-843 / IAM M-2473).